The sequence spans 143 residues: Transcriptional regulator MraZ (143 aa).

SpoVT-AbrB domains lie at 5-47 (EYSH…PMPV) and 76-119 (AMEA…SDEN).

The protein belongs to the MraZ family. As to quaternary structure, forms oligomers.

It localises to the cytoplasm. The protein localises to the nucleoid. In Leuconostoc citreum (strain KM20), this protein is Transcriptional regulator MraZ.